A 436-amino-acid chain; its full sequence is 3-ketoacyl-CoA thiolase (436 aa).

The Acyl-thioester intermediate role is filled by C99. Catalysis depends on proton acceptor residues H392 and C422.

This sequence belongs to the thiolase-like superfamily. Thiolase family. As to quaternary structure, heterotetramer of two alpha chains (FadJ) and two beta chains (FadI).

It localises to the cytoplasm. The catalysed reaction is an acyl-CoA + acetyl-CoA = a 3-oxoacyl-CoA + CoA. It functions in the pathway lipid metabolism; fatty acid beta-oxidation. Functionally, catalyzes the final step of fatty acid oxidation in which acetyl-CoA is released and the CoA ester of a fatty acid two carbons shorter is formed. The sequence is that of 3-ketoacyl-CoA thiolase from Escherichia coli O81 (strain ED1a).